A 122-amino-acid chain; its full sequence is Holo-[acyl-carrier-protein] synthase (122 aa).

Mg(2+)-binding residues include aspartate 8 and glutamate 60.

Belongs to the P-Pant transferase superfamily. AcpS family. It depends on Mg(2+) as a cofactor.

It localises to the cytoplasm. It catalyses the reaction apo-[ACP] + CoA = holo-[ACP] + adenosine 3',5'-bisphosphate + H(+). In terms of biological role, transfers the 4'-phosphopantetheine moiety from coenzyme A to a Ser of acyl-carrier-protein. This is Holo-[acyl-carrier-protein] synthase from Anaplasma phagocytophilum (strain HZ).